The primary structure comprises 156 residues: Small ribosomal subunit protein uS7 (156 aa).

This sequence belongs to the universal ribosomal protein uS7 family. Part of the 30S ribosomal subunit. Contacts proteins S9 and S11.

In terms of biological role, one of the primary rRNA binding proteins, it binds directly to 16S rRNA where it nucleates assembly of the head domain of the 30S subunit. Is located at the subunit interface close to the decoding center, probably blocks exit of the E-site tRNA. This is Small ribosomal subunit protein uS7 from Erythrobacter litoralis (strain HTCC2594).